A 732-amino-acid polypeptide reads, in one-letter code: Outer envelope protein 80, chloroplastic (732 aa).

Disordered stretches follow at residues 1–23 (MHCH…PSPK) and 135–154 (ESTQ…GHSV). A compositionally biased stretch (low complexity) spans 11–20 (SSSSIRIHSP). The POTRA domain maps to 314-396 (AEVNNISIRF…VDLIMNCVER (83 aa)).

The protein belongs to the OEP80 (TC 1.B.33.2) family.

The protein resides in the plastid. Its subcellular location is the chloroplast outer membrane. Functionally, plays an essential role during early stages of plastid development. This Arabidopsis thaliana (Mouse-ear cress) protein is Outer envelope protein 80, chloroplastic (OEP80).